A 165-amino-acid chain; its full sequence is Peptidyl-prolyl cis-trans isomerase A (165 aa).

Met-1 is modified (N-acetylmethionine). The residue at position 2 (Val-2) is an N-acetylvaline; in Peptidyl-prolyl cis-trans isomerase A, N-terminally processed. The 157-residue stretch at 7–163 (FFDIAVDGEP…KKITIADCGQ (157 aa)) folds into the PPIase cyclophilin-type domain. An N6-acetyllysine; alternate modification is found at Lys-28. Lys-28 is covalently cross-linked (Glycyl lysine isopeptide (Lys-Gly) (interchain with G-Cter in SUMO2); alternate). Residue Lys-28 forms a Glycyl lysine isopeptide (Lys-Gly) (interchain with G-Cter in ubiquitin); alternate linkage. 2 positions are modified to N6-acetyllysine: Lys-44 and Lys-76. The residue at position 77 (Ser-77) is a Phosphoserine. N6-acetyllysine; alternate is present on Lys-82. Residue Lys-82 forms a Glycyl lysine isopeptide (Lys-Gly) (interchain with G-Cter in SUMO2); alternate linkage. Thr-93 bears the Phosphothreonine mark. A glycan (N-linked (GlcNAc...) asparagine) is linked at Asn-108. 3 positions are modified to N6-acetyllysine: Lys-125, Lys-131, and Lys-133.

Belongs to the cyclophilin-type PPIase family. PPIase A subfamily. Interacts with protein phosphatase PPP3CA/calcineurin A. Interacts with isoform 2 of BSG/CD147. Interacts with FOXO1; the interaction promotes FOXO1 dephosphorylation, nuclear accumulation and transcriptional activity. Interacts with integrin ITGA2B:ITGB3; the interaction is ROS and peptidyl-prolyl cis-trans isomerase (PPIase) activity-dependent and is increased in the presence of thrombin. Interacts with MAP3K5. Interacts with TARDBP; the interaction is dependent on the RNA-binding activity of TARDBP and the PPIase activity of PPIA/CYPA and the acetylation of PPIA/CYPA at Lys-125 favors the interaction. Interacts with HNRNPA1, HNRNPA2B1, HNRNPC, RBMX, HNRNPK and HNRNPM. In terms of processing, acetylation at Lys-125 markedly inhibits catalysis of cis to trans isomerization. PPIA acetylation also antagonizes the immunosuppressive effects of cyclosporine by inhibiting the sequential steps of cyclosporine binding and calcineurin inhibition. Acetylation at Lys-125 favors the interaction with TARDBP.

Its subcellular location is the cytoplasm. It localises to the secreted. The protein localises to the nucleus. It catalyses the reaction [protein]-peptidylproline (omega=180) = [protein]-peptidylproline (omega=0). Binds cyclosporin A (CsA). CsA mediates some of its effects via an inhibitory action on PPIase. In terms of biological role, catalyzes the cis-trans isomerization of proline imidic peptide bonds in oligopeptides. Exerts a strong chemotactic effect on leukocytes partly through activation of one of its membrane receptors BSG/CD147, initiating a signaling cascade that culminates in MAPK/ERK activation. Activates endothelial cells (ECs) in a proinflammatory manner by stimulating activation of NF-kappa-B and ERK, JNK and p38 MAP-kinases and by inducing expression of adhesion molecules including SELE and VCAM1. Induces apoptosis in ECs by promoting the FOXO1-dependent expression of CCL2 and BCL2L11 which are involved in EC chemotaxis and apoptosis. In response to oxidative stress, initiates proapoptotic and antiapoptotic signaling in ECs via activation of NF-kappa-B and AKT1 and up-regulation of antiapoptotic protein BCL2. Negatively regulates MAP3K5/ASK1 kinase activity, autophosphorylation and oxidative stress-induced apoptosis mediated by MAP3K5/ASK1. Necessary for the assembly of TARDBP in heterogeneous nuclear ribonucleoprotein (hnRNP) complexes and regulates TARDBP binding to RNA UG repeats and TARDBP-dependent expression of HDAC6, ATG7 and VCP which are involved in clearance of protein aggregates. Plays an important role in platelet activation and aggregation. Regulates calcium mobilization and integrin ITGA2B:ITGB3 bidirectional signaling via increased ROS production as well as by facilitating the interaction between integrin and the cell cytoskeleton. Binds heparan sulfate glycosaminoglycans. The chain is Peptidyl-prolyl cis-trans isomerase A (PPIA) from Symphalangus syndactylus (Siamang).